The primary structure comprises 377 residues: N-acetyldiaminopimelate deacetylase (377 aa).

The active site involves D70. E129 (proton acceptor) is an active-site residue.

This sequence belongs to the peptidase M20A family. N-acetyldiaminopimelate deacetylase subfamily.

The enzyme catalyses N-acetyl-(2S,6S)-2,6-diaminopimelate + H2O = (2S,6S)-2,6-diaminopimelate + acetate. It participates in amino-acid biosynthesis; L-lysine biosynthesis via DAP pathway; LL-2,6-diaminopimelate from (S)-tetrahydrodipicolinate (acetylase route): step 3/3. Its function is as follows. Catalyzes the conversion of N-acetyl-diaminopimelate to diaminopimelate and acetate. The protein is N-acetyldiaminopimelate deacetylase of Streptococcus thermophilus (strain ATCC BAA-491 / LMD-9).